An 84-amino-acid polypeptide reads, in one-letter code: Small ribosomal subunit protein bS20 (84 aa).

The disordered stretch occupies residues 1-25 (MANIVSNEKTYRHTQKVRKENHAKM).

It belongs to the bacterial ribosomal protein bS20 family.

Binds directly to 16S ribosomal RNA. This Ureaplasma urealyticum serovar 10 (strain ATCC 33699 / Western) protein is Small ribosomal subunit protein bS20.